A 591-amino-acid polypeptide reads, in one-letter code: Melatonin-related receptor (591 aa).

The Extracellular portion of the chain corresponds to 1–38 (MATVPKSNMGPTKAVPTPFGCIGCKLPKPDYPPALIIF). The chain crosses the membrane as a helical span at residues 39-59 (MFCAMVITVVVDLIGNSMVIL). At 60-72 (AVTKNKKLRNSGN) the chain is on the cytoplasmic side. Residues 73–93 (IFVASLSVADMLVAIYPYPLM) form a helical membrane-spanning segment. At 94-111 (LYAMSVGGWDLSQLQCQM) the chain is on the extracellular side. Residues cysteine 109 and cysteine 186 are joined by a disulfide bond. A helical membrane pass occupies residues 112–132 (VGLVTGLSVVGSIFNITAIAI). Over 133 to 151 (NRYCYICHSLQYKRIFSLR) the chain is Cytoplasmic. A helical membrane pass occupies residues 152–172 (NTCIYLVVTWVMTVLAVLPNM). Residues 173–196 (YIGTIEYDPRTYTCIFNYVNNPAF) lie on the Extracellular side of the membrane. A helical membrane pass occupies residues 197 to 217 (TVTIVCIHFVLPLIIVGYCYT). The Cytoplasmic segment spans residues 218-247 (KIWIKVLAARDPAGQNPDNQFAEVRNFLTM). Residues 248-268 (FVIFLLFAVCWCPVNVLTVLV) form a helical membrane-spanning segment. Over 269–281 (AVIPKEMAGKIPN) the chain is Extracellular. Residues 282–302 (WLYLAAYCIAYFNSCLNAIIY) form a helical membrane-spanning segment. Over 303–591 (GILNESFRRE…DSDCSDEMAV (289 aa)) the chain is Cytoplasmic. Residues 378 to 427 (LPGDASAPHSDRASVRPKPQTRSTSVYRKPASIHHKSISGHPKSASVYPK) are disordered.

This sequence belongs to the G-protein coupled receptor 1 family. Homodimer, and heterodimer with MTNR1A and MTNR1B. Interacts with KAT5. Interacts with RTN4 isoform A/NOGO-A. Interacts with TGFBR1. Strongly expressed in the brain with highly restricted pattern of expression, confined to a subset of the ependymal cells of the third ventricle and a population of cells in the dorsomedial hypothalamic nucleus.

Its subcellular location is the cell membrane. It is found in the postsynaptic density. Its function is as follows. G protein-coupled receptor that plays a role in numerous physiological processes including regulation of energy metabolism, neurite outgrowth or cell migration. Promotes self-renewal and neuronal differentiation of neural progenitor cells through activation of the NOTCH and WNT/beta-catenin signaling pathways. Modulates the KAT5-dependent glucocorticoid receptor signaling by modulating KAT5 subcellular compartmentalisation. Also plays a role in the activation TGFBR1 in the absence of TGFBR2 by interfering with FKBP1A binding to TGFBR1, leading to induction of both canonical and non-canonical SMAD signaling pathways resulting in inhibition of proliferation or promotion of migration. In Mus musculus (Mouse), this protein is Melatonin-related receptor (Gpr50).